Reading from the N-terminus, the 426-residue chain is MSNRMSQSLNEEDPQIAEAIANEERRQHEGLELIASENFVSEAVLQAAGSVFTNKYAEGYPGKRYYGGCEYADVVENLARDRAKELFGAEHANVQPHSGSSANMEAYGAILQPGDTILGLNLAHGGHLTHGHPLNFSGKTYKIVPYGVTKETETIDYDELEKLALEHHPKVIVGGGSAYPRIFDFKRMREIADKAGALFMVDMAHFAGLVAGGAHPSPVPHAHVVTTTTHKTLRGPRAGMILSKQEFAAAIDKVTFPGMQGGPLVHIIAAKAVCFKEAMEPSFKDYANQVVANAKVLAQSLADQGFRIISGGTDTHLMLIDVFAAGMLGSEAEKALGEAGITVNKNAIPFDTNPPMKPSGVRIGTPALTTRGMKEPEMRQVGIWIAESLRHRTDPDFLGRVRRQVHELCDAYPLYPERRATRLATV.

Residues L122 and 126-128 (GHL) each bind (6S)-5,6,7,8-tetrahydrofolate. K231 is modified (N6-(pyridoxal phosphate)lysine).

Belongs to the SHMT family. Homodimer. Pyridoxal 5'-phosphate is required as a cofactor.

Its subcellular location is the cytoplasm. The catalysed reaction is (6R)-5,10-methylene-5,6,7,8-tetrahydrofolate + glycine + H2O = (6S)-5,6,7,8-tetrahydrofolate + L-serine. Its pathway is one-carbon metabolism; tetrahydrofolate interconversion. The protein operates within amino-acid biosynthesis; glycine biosynthesis; glycine from L-serine: step 1/1. Its function is as follows. Catalyzes the reversible interconversion of serine and glycine with tetrahydrofolate (THF) serving as the one-carbon carrier. This reaction serves as the major source of one-carbon groups required for the biosynthesis of purines, thymidylate, methionine, and other important biomolecules. Also exhibits THF-independent aldolase activity toward beta-hydroxyamino acids, producing glycine and aldehydes, via a retro-aldol mechanism. The polypeptide is Serine hydroxymethyltransferase (Koribacter versatilis (strain Ellin345)).